The primary structure comprises 386 residues: Formate-dependent phosphoribosylglycinamide formyltransferase (386 aa).

N(1)-(5-phospho-beta-D-ribosyl)glycinamide contacts are provided by residues 15 to 16 (EL) and E75. ATP-binding positions include R107, K148, 153–158 (SSGKGQ), 188–191 (EQFI), and E196. Positions 112–301 (ALAAQQLNLQ…EFELHLRAIV (190 aa)) constitute an ATP-grasp domain. The Mg(2+) site is built by E260 and E272. Residues D279, K349, and 356-357 (RR) each bind N(1)-(5-phospho-beta-D-ribosyl)glycinamide.

This sequence belongs to the PurK/PurT family. As to quaternary structure, homodimer.

It carries out the reaction N(1)-(5-phospho-beta-D-ribosyl)glycinamide + formate + ATP = N(2)-formyl-N(1)-(5-phospho-beta-D-ribosyl)glycinamide + ADP + phosphate + H(+). The protein operates within purine metabolism; IMP biosynthesis via de novo pathway; N(2)-formyl-N(1)-(5-phospho-D-ribosyl)glycinamide from N(1)-(5-phospho-D-ribosyl)glycinamide (formate route): step 1/1. Functionally, involved in the de novo purine biosynthesis. Catalyzes the transfer of formate to 5-phospho-ribosyl-glycinamide (GAR), producing 5-phospho-ribosyl-N-formylglycinamide (FGAR). Formate is provided by PurU via hydrolysis of 10-formyl-tetrahydrofolate. The chain is Formate-dependent phosphoribosylglycinamide formyltransferase from Francisella tularensis subsp. novicida (strain U112).